The sequence spans 305 residues: MTSLCLTIAPAVLSLICLSSYGWAEGDTTDNEYLRFGRENNNGYIRFGRNDPFLRFGKKSDPFLRFGKQDPFLRIGRQDPFLRFGKQDPFLRFGKQDPFLRIGKQDPFLRFGRSEPYLRFGRNDPYLRFGRNDPYLRFGRNDPYLRFGRNDPYLRFGKNDPFLRFGKSVDGEIEAGVDAVTLSREHEFAHENAASDRQKRSAYTDAIDKDNSLTSLVREAREASDSNGQINDGKVVEVPVFRDTRNGHYMRFGKKNEVDVTDGDTYDRDYSDSDVSNLLRYYGNTVPLPAYDKRSEHKQEYMRFG.

The first 19 residues, 1–19 (MTSLCLTIAPAVLSLICLS), serve as a signal peptide directing secretion. 3 positions are modified to phenylalanine amide: Phe-36, Phe-47, and Phe-66. An Isoleucine amide modification is found at Ile-75. 2 positions are modified to phenylalanine amide: Phe-84 and Phe-93. Ile-102 is subject to Isoleucine amide. Residues Phe-111, Phe-120, Phe-129, Phe-138, Phe-147, Phe-156, and Phe-165 each carry the phenylalanine amide modification. A propeptide spanning residues 168–305 (SVDGEIEAGV…EHKQEYMRFG (138 aa)) is cleaved from the precursor.

Belongs to the FARP (FMRFamide related peptide) family. As to expression, central nervous system.

The protein localises to the secreted. Its function is as follows. Can function as both cardioregulatory hormones and transmitters and may regulate cardiovascular function. The polypeptide is FMRFamide-related peptides type HF-4 (Cornu aspersum (Brown garden snail)).